Reading from the N-terminus, the 492-residue chain is NADH-quinone oxidoreductase subunit N 2 (492 aa).

The next 14 membrane-spanning stretches (helical) occupy residues 16 to 36 (ILPE…DALI), 44 to 64 (PLGY…ACQA), 87 to 107 (FSLF…LVSF), 118 to 138 (GEYY…TSAT), 140 to 160 (LVLI…LAAM), 175 to 195 (FLLG…IFGA), 216 to 236 (PIIY…VAAA), 250 to 270 (PSPI…AVLL), 282 to 302 (FWIV…GALV), 309 to 329 (LLAY…AAAK), 333 to 353 (ISAA…AFAV), 381 to 401 (AAIL…GGFF), 416 to 438 (VWLT…RIIV), and 455 to 475 (PFGL…LGVL).

The protein belongs to the complex I subunit 2 family. NDH-1 is composed of 14 different subunits. Subunits NuoA, H, J, K, L, M, N constitute the membrane sector of the complex.

It is found in the cell inner membrane. The enzyme catalyses a quinone + NADH + 5 H(+)(in) = a quinol + NAD(+) + 4 H(+)(out). Functionally, NDH-1 shuttles electrons from NADH, via FMN and iron-sulfur (Fe-S) centers, to quinones in the respiratory chain. The immediate electron acceptor for the enzyme in this species is believed to be ubiquinone. Couples the redox reaction to proton translocation (for every two electrons transferred, four hydrogen ions are translocated across the cytoplasmic membrane), and thus conserves the redox energy in a proton gradient. This chain is NADH-quinone oxidoreductase subunit N 2, found in Koribacter versatilis (strain Ellin345).